Here is a 185-residue protein sequence, read N- to C-terminus: CASP-like protein SELMODRAFT_413556 (185 aa).

Topologically, residues 1 to 89 are cytoplasmic; it reads MATLPLSLIF…AVTVLFYLAK (89 aa). Residues 90-110 form a helical membrane-spanning segment; it reads LVFGILGLALSIIWLLHIIVF. At 111-131 the chain is on the extracellular side; that stretch reads MLVNPPAFPFLNQVFIQLDSA. Residues 132–152 traverse the membrane as a helical segment; it reads WGLLGTTAFAIFCYYLIMSVI. Residues 153–163 are Cytoplasmic-facing; the sequence is SGEMHSIHPMK. A helical membrane pass occupies residues 164-184; the sequence is YQGTLMNSFLFNVAIILLCST. Arg185 is a topological domain (extracellular).

Belongs to the Casparian strip membrane proteins (CASP) family. Homodimer and heterodimers.

Its subcellular location is the cell membrane. This is CASP-like protein SELMODRAFT_413556 from Selaginella moellendorffii (Spikemoss).